We begin with the raw amino-acid sequence, 419 residues long: Histidine--tRNA ligase (419 aa).

This sequence belongs to the class-II aminoacyl-tRNA synthetase family. In terms of assembly, homodimer.

The protein resides in the cytoplasm. The enzyme catalyses tRNA(His) + L-histidine + ATP = L-histidyl-tRNA(His) + AMP + diphosphate + H(+). In Novosphingobium aromaticivorans (strain ATCC 700278 / DSM 12444 / CCUG 56034 / CIP 105152 / NBRC 16084 / F199), this protein is Histidine--tRNA ligase.